A 345-amino-acid chain; its full sequence is Dihydroorotase (345 aa).

H14 and H16 together coordinate Zn(2+). Residues H16–R18 and N42 each bind substrate. Positions 100, 137, and 175 each coordinate Zn(2+). At K100 the chain carries N6-carboxylysine. H137 is a substrate binding site. L220 lines the substrate pocket. D248 contributes to the Zn(2+) binding site. D248 is an active-site residue. Substrate contacts are provided by H252 and A264.

The protein belongs to the metallo-dependent hydrolases superfamily. DHOase family. Class II DHOase subfamily. As to quaternary structure, homodimer. Zn(2+) is required as a cofactor.

The catalysed reaction is (S)-dihydroorotate + H2O = N-carbamoyl-L-aspartate + H(+). The protein operates within pyrimidine metabolism; UMP biosynthesis via de novo pathway; (S)-dihydroorotate from bicarbonate: step 3/3. In terms of biological role, catalyzes the reversible cyclization of carbamoyl aspartate to dihydroorotate. This chain is Dihydroorotase, found in Nitrosococcus oceani (strain ATCC 19707 / BCRC 17464 / JCM 30415 / NCIMB 11848 / C-107).